The sequence spans 96 residues: uncharacterized protein (96 aa).

The CBS domain maps to 57–96 (MTKKVRTTKKDASISDAAALMDKHNVNRLPVVDENNKLVL).

This is an uncharacterized protein from Methanobacterium ivanovii.